An 81-amino-acid polypeptide reads, in one-letter code: uncharacterized protein (81 aa).

Residue Lys-5 forms a Glycyl lysine isopeptide (Lys-Gly) (interchain with G-Cter in host protein DncV) linkage.

Post-translationally, cross-linked via an isopeptide bond to E.coli host protein DncV during infection.

This is an uncharacterized protein from Enterobacteria phage T4 (Bacteriophage T4).